Here is a 602-residue protein sequence, read N- to C-terminus: Elongation factor 4 (602 aa).

The region spanning 7–189 (ARLRNFCIIA…SVVDRIPPPK (183 aa)) is the tr-type G domain. Residues 19–24 (DHGKST) and 136–139 (NKVD) each bind GTP.

The protein belongs to the TRAFAC class translation factor GTPase superfamily. Classic translation factor GTPase family. LepA subfamily.

It is found in the cell inner membrane. It carries out the reaction GTP + H2O = GDP + phosphate + H(+). Its function is as follows. Required for accurate and efficient protein synthesis under certain stress conditions. May act as a fidelity factor of the translation reaction, by catalyzing a one-codon backward translocation of tRNAs on improperly translocated ribosomes. Back-translocation proceeds from a post-translocation (POST) complex to a pre-translocation (PRE) complex, thus giving elongation factor G a second chance to translocate the tRNAs correctly. Binds to ribosomes in a GTP-dependent manner. The chain is Elongation factor 4 from Prochlorococcus marinus (strain SARG / CCMP1375 / SS120).